The sequence spans 502 residues: Dynein regulatory complex subunit 2 (502 aa).

Coiled coils occupy residues 96–160 (DSVI…RKAI) and 252–285 (EKSS…HSRE).

Belongs to the DRC2 family. Component of the nexin-dynein regulatory complex (N-DRC). Interacts with DRC1.

It localises to the cytoplasm. It is found in the cytoskeleton. The protein localises to the flagellum basal body. Its subcellular location is the cell projection. The protein resides in the cilium. It localises to the flagellum. It is found in the flagellum axoneme. Component of the nexin-dynein regulatory complex (N-DRC), a key regulator of ciliary/flagellar motility which maintains the alignment and integrity of the distal axoneme and regulates microtubule sliding in motile axonemes. Plays a critical role in the assembly of N-DRC and also stabilizes the assembly of multiple inner dynein arms and radial spokes. Coassembles with DRC1 to form a central scaffold needed for assembly of the N-DRC and its attachment to the outer doublet microtubules. In Rattus norvegicus (Rat), this protein is Dynein regulatory complex subunit 2 (Ccdc65).